The primary structure comprises 632 residues: tRNA uridine 5-carboxymethylaminomethyl modification enzyme MnmG (632 aa).

FAD is bound by residues 15–20 (GAGHAG), Ile127, and Ser182. 276-290 (GPRYCPSIEDKIVRF) is a binding site for NAD(+). Gln373 is a binding site for FAD.

This sequence belongs to the MnmG family. As to quaternary structure, homodimer. Heterotetramer of two MnmE and two MnmG subunits. Requires FAD as cofactor.

Its subcellular location is the cytoplasm. Functionally, NAD-binding protein involved in the addition of a carboxymethylaminomethyl (cmnm) group at the wobble position (U34) of certain tRNAs, forming tRNA-cmnm(5)s(2)U34. This Streptococcus pyogenes serotype M3 (strain SSI-1) protein is tRNA uridine 5-carboxymethylaminomethyl modification enzyme MnmG.